The primary structure comprises 197 residues: Putative NADH dehydrogenase/NAD(P)H nitroreductase Lcho_1290 (197 aa).

The protein belongs to the nitroreductase family. HadB/RutE subfamily. FMN is required as a cofactor.

This chain is Putative NADH dehydrogenase/NAD(P)H nitroreductase Lcho_1290, found in Leptothrix cholodnii (strain ATCC 51168 / LMG 8142 / SP-6) (Leptothrix discophora (strain SP-6)).